The primary structure comprises 490 residues: ATP synthase subunit beta, plastid (490 aa).

ATP is bound at residue G170 to T177.

It belongs to the ATPase alpha/beta chains family. As to quaternary structure, F-type ATPases have 2 components, CF(1) - the catalytic core - and CF(0) - the membrane proton channel. CF(1) has five subunits: alpha(3), beta(3), gamma(1), delta(1), epsilon(1). CF(0) has four main subunits: a(1), b(1), b'(1) and c(9-12).

It is found in the plastid membrane. It carries out the reaction ATP + H2O + 4 H(+)(in) = ADP + phosphate + 5 H(+)(out). Produces ATP from ADP in the presence of a proton gradient across the membrane. The catalytic sites are hosted primarily by the beta subunits. In Cuscuta exaltata (Tall dodder), this protein is ATP synthase subunit beta, plastid.